The following is a 113-amino-acid chain: rRNA-processing protein cgrA (113 aa).

Residues 1–15 (MSTITTSSVASSNGM) are compositionally biased toward polar residues. The segment at 1–113 (MSTITTSSVA…REKRNKLLHS (113 aa)) is disordered. Positions 37–100 (SYEKRLEARK…EKMHRKRVER (64 aa)) form a coiled coil. A compositionally biased stretch (basic and acidic residues) spans 38 to 92 (YEKRLEARKLQEAVKEHEREMREEREAERKAQIQKIKDRRAAKEEKERYEKMAEK). Over residues 93–113 (MHRKRVERLKRREKRNKLLHS) the composition is skewed to basic residues.

The protein belongs to the CGR1 family.

Its subcellular location is the nucleus. It localises to the nucleolus. Its function is as follows. Involved in nucleolar integrity and required for processing of the pre-rRNA for the 60S ribosome subunit. The sequence is that of rRNA-processing protein cgrA (cgrA) from Aspergillus clavatus (strain ATCC 1007 / CBS 513.65 / DSM 816 / NCTC 3887 / NRRL 1 / QM 1276 / 107).